We begin with the raw amino-acid sequence, 333 residues long: Transcription initiation factor IIB (333 aa).

The segment at 33–64 (EIYRCPICGNDRFVYNYERGEVVCIVCGAVVQ) adopts a TFIIB-type zinc-finger fold. Positions 37, 40, 56, and 59 each coordinate Zn(2+). A run of 2 repeats spans residues 149 to 232 (QELE…LREL) and 243 to 324 (LYIS…ELAK).

It belongs to the TFIIB family.

Functionally, stabilizes TBP binding to an archaeal box-A promoter. Also responsible for recruiting RNA polymerase II to the pre-initiation complex (DNA-TBP-TFIIB). The sequence is that of Transcription initiation factor IIB from Pyrobaculum arsenaticum (strain DSM 13514 / JCM 11321 / PZ6).